The sequence spans 227 residues: UPF0758 protein Dhaf_4352 (227 aa).

The 123-residue stretch at 105 to 227 folds into the MPN domain; the sequence is VINSPQDIAH…YISLKERGIL (123 aa). Zn(2+) is bound by residues histidine 176, histidine 178, and aspartate 189. A JAMM motif motif is present at residues 176–189; sequence HNHPSGDPTPSSED.

Belongs to the UPF0758 family.

The chain is UPF0758 protein Dhaf_4352 from Desulfitobacterium hafniense (strain DSM 10664 / DCB-2).